We begin with the raw amino-acid sequence, 261 residues long: uncharacterized protein (261 aa).

Residues 135–261 (LVLKRIDEDI…VTEYTIYYSG (127 aa)) form the N-acetyltransferase domain.

Belongs to the acetyltransferase family.

This is an uncharacterized protein from Bacillus subtilis (strain 168).